Consider the following 400-residue polypeptide: MKEKTIIIVGGGQAAAMAAASLRQQGFTGELHLFSDERHLPYERPPLSKSMLLEDSPQLQQVLPANWWQENNVHLHSGVTIKTLGRDTRELVLTNGESWHWDQLFIATGAAARPLPLLDALGERCFTLRHAGDAARLREVLQPERSVVIVGAGTIGLELAASATQRRCKVTVIELAATVMGRNAPPPVQRYLLQRHQQAGVRILLNNAIEHVVDGEKVELTLQSGETLQADVVIYGIGISANEQLAREANLDTANGIVIDEACRTCDPAIFAGGDVAITRLDNGALHRCESWENANNQAQIAAAAMLGLPLPLLPPPWFWSDQYSDNLQFIGDMRGDDWLCRGNPETQKAIWFNLQNGVLIGAVTLNQGREIRPIRKWIQSGKTFDAKLLIDENIALKSL.

5–36 (TIIIVGGGQAAAMAAASLRQQGFTGELHLFSD) is an FAD binding site. An NAD(+)-binding site is contributed by 146 to 174 (SVVIVGAGTIGLELAASATQRRCKVTVIE).

This sequence belongs to the bacterial ring-hydroxylating dioxygenase ferredoxin reductase family. As to quaternary structure, this dioxygenase system consists of four proteins: the two subunits of the hydroxylase component (HcaE and HcaF), a ferredoxin (HcaC) and a ferredoxin reductase (HcaD). Requires FAD as cofactor.

The catalysed reaction is 2 reduced [2Fe-2S]-[ferredoxin] + NAD(+) + H(+) = 2 oxidized [2Fe-2S]-[ferredoxin] + NADH. It functions in the pathway aromatic compound metabolism; 3-phenylpropanoate degradation. Its function is as follows. Part of the multicomponent 3-phenylpropionate dioxygenase, that converts 3-phenylpropionic acid (PP) and cinnamic acid (CI) into 3-phenylpropionate-dihydrodiol (PP-dihydrodiol) and cinnamic acid-dihydrodiol (CI-dihydrodiol), respectively. The sequence is that of 3-phenylpropionate/cinnamic acid dioxygenase ferredoxin--NAD(+) reductase component from Escherichia coli (strain 55989 / EAEC).